We begin with the raw amino-acid sequence, 576 residues long: 4-alpha-glucanotransferase DPE1, chloroplastic/amyloplastic (576 aa).

The N-terminal 45 residues, 1-45 (MSILLRPSSSPSLCSSLKLFRLSSPDSLIDAAVLRNRTKPSQSFR), are a transit peptide targeting the chloroplast.

This sequence belongs to the disproportionating enzyme family.

It is found in the plastid. Its subcellular location is the chloroplast. The protein localises to the amyloplast. The enzyme catalyses Transfers a segment of a (1-&gt;4)-alpha-D-glucan to a new position in an acceptor, which may be glucose or a (1-&gt;4)-alpha-D-glucan.. Chloroplastic alpha-glucanotransferase involved in maltotriose metabolism. Probably uses maltotriose as substrate to transfer a maltosyl unit from one molecule to another, resulting in glucose and maltopentaose. The latter can then be further metabolized to maltose and maltotriose by beta-amylase. Required for normal starch degradation in leaves. This is 4-alpha-glucanotransferase DPE1, chloroplastic/amyloplastic (DPE1) from Arabidopsis thaliana (Mouse-ear cress).